The sequence spans 152 residues: Lipoprotein signal peptidase (152 aa).

The next 2 helical transmembrane spans lie at 55 to 75 and 87 to 107; these read NGRWFFVAVAALAVAGILYYL and VALGLVMGGAVGNMIDRIATG. Residues aspartate 111 and aspartate 129 contribute to the active site. Residues 125–145 traverse the membrane as a helical segment; it reads FNVADICVTVGVGLLFLHLVL.

This sequence belongs to the peptidase A8 family.

The protein localises to the cell membrane. The enzyme catalyses Release of signal peptides from bacterial membrane prolipoproteins. Hydrolyzes -Xaa-Yaa-Zaa-|-(S,diacylglyceryl)Cys-, in which Xaa is hydrophobic (preferably Leu), and Yaa (Ala or Ser) and Zaa (Gly or Ala) have small, neutral side chains.. The protein operates within protein modification; lipoprotein biosynthesis (signal peptide cleavage). Its function is as follows. This protein specifically catalyzes the removal of signal peptides from prolipoproteins. This is Lipoprotein signal peptidase from Symbiobacterium thermophilum (strain DSM 24528 / JCM 14929 / IAM 14863 / T).